We begin with the raw amino-acid sequence, 618 residues long: Glutamine--fructose-6-phosphate aminotransferase [isomerizing] (618 aa).

C2 acts as the Nucleophile; for GATase activity in catalysis. Residues 2–226 (CGIVGYAGRN…DFETAVLSPT (225 aa)) enclose the Glutamine amidotransferase type-2 domain. Positions 69 to 94 (HTRWATHGRPSTKNAHPHNSGGNPGK) are disordered. 2 SIS domains span residues 295–434 (SEDE…VRDR) and 467–608 (CAEG…IDKP). K613 acts as the For Fru-6P isomerization activity in catalysis.

As to quaternary structure, homodimer.

The protein resides in the cytoplasm. The catalysed reaction is D-fructose 6-phosphate + L-glutamine = D-glucosamine 6-phosphate + L-glutamate. Functionally, catalyzes the first step in hexosamine metabolism, converting fructose-6P into glucosamine-6P using glutamine as a nitrogen source. This chain is Glutamine--fructose-6-phosphate aminotransferase [isomerizing], found in Methanosarcina acetivorans (strain ATCC 35395 / DSM 2834 / JCM 12185 / C2A).